The chain runs to 108 residues: Nucleoid-associated protein IL1848 (108 aa).

2 disordered regions span residues 1–26 and 88–108; these read MFKGGMGNMMKQAQQMQERMQQAQEE and KERMSEITGGMGLPPGFKMPF. The segment covering 9–26 has biased composition (low complexity); sequence MMKQAQQMQERMQQAQEE.

This sequence belongs to the YbaB/EbfC family. Homodimer.

The protein resides in the cytoplasm. The protein localises to the nucleoid. Its function is as follows. Binds to DNA and alters its conformation. May be involved in regulation of gene expression, nucleoid organization and DNA protection. This chain is Nucleoid-associated protein IL1848, found in Idiomarina loihiensis (strain ATCC BAA-735 / DSM 15497 / L2-TR).